The sequence spans 616 residues: 2-[(L-alanin-3-ylcarbamoyl)methyl]-3-(2-aminoethylcarbamoyl)-2-hydroxypropanoate synthase (616 aa).

Belongs to the IucA/IucC family. As to quaternary structure, forms a mixture of monomer and dimer in solution.

It carries out the reaction 2-[(2-aminoethylcarbamoyl)methyl]-2-hydroxybutanedioate + (S)-2,3-diaminopropanoate + ATP = 2-[(L-alanin-3-ylcarbamoyl)methyl]-3-(2-aminoethylcarbamoyl)-2-hydroxypropanoate + AMP + diphosphate. It functions in the pathway siderophore biosynthesis. Functionally, catalyzes the condensation of L-2,3-diaminopropionic acid (L-Dap) and citryl-diaminoethane to form L-2,3-diaminopropionyl-citryl-diaminoethane, the third step in staphyloferrin B biosynthesis. This is 2-[(L-alanin-3-ylcarbamoyl)methyl]-3-(2-aminoethylcarbamoyl)-2-hydroxypropanoate synthase from Staphylococcus aureus (strain NCTC 8325 / PS 47).